Here is a 110-residue protein sequence, read N- to C-terminus: Nucleoid-associated protein YE3092 (110 aa).

The protein belongs to the YbaB/EbfC family. Homodimer.

Its subcellular location is the cytoplasm. It localises to the nucleoid. In terms of biological role, binds to DNA and alters its conformation. May be involved in regulation of gene expression, nucleoid organization and DNA protection. The chain is Nucleoid-associated protein YE3092 from Yersinia enterocolitica serotype O:8 / biotype 1B (strain NCTC 13174 / 8081).